The chain runs to 149 residues: Large ribosomal subunit protein bL9 (149 aa).

It belongs to the bacterial ribosomal protein bL9 family.

Binds to the 23S rRNA. The sequence is that of Large ribosomal subunit protein bL9 from Acidothermus cellulolyticus (strain ATCC 43068 / DSM 8971 / 11B).